Here is a 110-residue protein sequence, read N- to C-terminus: Secreted RxLR effector protein 89 (110 aa).

The first 22 residues, 1–22 (MTSVVIVVSVAVLLGVLVITDS), serve as a signal peptide directing secretion. Asparagine 29 carries an N-linked (GlcNAc...) asparagine glycan. The short motif at 61–74 (RHLRTILQWWQERR) is the RxLR-dEER element.

The protein belongs to the RxLR effector family.

The protein resides in the secreted. Its subcellular location is the host nucleus. The protein localises to the host cytoplasm. Secreted effector that completely suppresses the host cell death induced by cell death-inducing proteins. The sequence is that of Secreted RxLR effector protein 89 from Plasmopara viticola (Downy mildew of grapevine).